The following is a 530-amino-acid chain: T-box transcription factor TBX21 (530 aa).

Positions 1 to 55 (MGIVEPGCGDMLTGTEPMPSDEGRGPGADQQHRFFYPEPGAQDPTDRRAGSSLGT) are disordered. The residue at position 52 (serine 52) is a Phosphoserine. Phosphothreonine is present on threonine 55. Phosphotyrosine is present on residues tyrosine 76 and tyrosine 117. A DNA-binding region (T-box) is located at residues 140–325 (LSNHLLWSKF…NNPFAKGFRE (186 aa)). Tyrosine 219 is subject to Phosphotyrosine; by ABL1. Serine 224 carries the post-translational modification Phosphoserine. The residue at position 265 (tyrosine 265) is a Phosphotyrosine; by ABL1. A Phosphothreonine modification is found at threonine 302. A Phosphotyrosine; by ABL1 modification is found at tyrosine 304. Residue lysine 313 forms a Glycyl lysine isopeptide (Lys-Gly) (interchain with G-Cter in ubiquitin) linkage. The interval 444 to 530 (AGWFRPMRTL…EGQFYNYFPN (87 aa)) is disordered. Residues 462 to 482 (SEEQGSSPSLWPEVTSLQPEP) show a composition bias toward polar residues. Positions 498–515 (SPYPSSGDSSSPAGAPSP) are enriched in low complexity. The residue at position 508 (serine 508) is a Phosphoserine. Residue tyrosine 525 is modified to Phosphotyrosine; by ITK.

Interacts with RUNX1 and RUNX3. Interacts with ITK. The phosphorylated form (at Tyr-525) interacts with GATA3. Interacts with ABL1. Interacts with RELA. The phosphorylated form (at Thr-302) interacts with NFATC2. Interacts with KDM6B. Interacts with SMARCA4 in a KDM6B-dependent manner. Interacts with CCTN1 and CDK9. Interacts with USP10. In terms of processing, phosphorylations at Ser-52, Tyr-76, Ser-224 and Ser-508 are regulated by mTORC1. Phosphorylation at Tyr-525 is essential for its interaction GATA3. Phosphorylation at Tyr-219, Tyr-265 and Tyr-304 enhances its transcriptional activator activity. Phosphorylation at Thr-302 is required for its interaction with NFATC2. Ubiquitinated at Lys-313, leading to its degradation by the proteasome. Ubiquitination is essential for controlling protein stability, binding to the T-box-binding element of the IFN-gamma promoter, and for interaction with NFATC2 through induction of phosphorylation at Thr-302. Deubiquitinated by USP10 leading to its stabilization. In terms of tissue distribution, T-cell specific. Expressed in regulatory T (TReg) cells.

The protein resides in the nucleus. In terms of biological role, lineage-defining transcription factor which initiates Th1 lineage development from naive Th precursor cells both by activating Th1 genetic programs and by repressing the opposing Th2 and Th17 genetic programs. Activates transcription of a set of genes important for Th1 cell function, including those encoding IFN-gamma and the chemokine receptor CXCR3. Activates IFNG and CXCR3 genes in part by recruiting chromatin remodeling complexes including KDM6B, a SMARCA4-containing SWI/SNF-complex, and an H3K4me2-methyltransferase complex to their promoters and all of these complexes serve to establish a more permissive chromatin state conducive with transcriptional activation. Can activate Th1 genes also via recruitment of Mediator complex and P-TEFb (composed of CDK9 and CCNT1/cyclin-T1) in the form of the super elongation complex (SEC) to super-enhancers and associated genes in activated Th1 cells. Inhibits the Th17 cell lineage commitment by blocking RUNX1-mediated transactivation of Th17 cell-specific transcriptinal regulator RORC. Inhibits the Th2 cell lineage commitment by suppressing the production of Th2 cytokines, such as IL-4, IL-5, and IL- 13, via repression of transcriptional regulators GATA3 and NFATC2. Protects Th1 cells from amplifying aberrant type-I IFN response in an IFN-gamma abundant microenvironment by acting as a repressor of type-I IFN transcription factors and type-I IFN- stimulated genes. Acts as a regulator of antiviral B-cell responses; controls chronic viral infection by promoting the antiviral antibody IgG2a isotype switching and via regulation of a broad antiviral gene expression program. The sequence is that of T-box transcription factor TBX21 (Tbx21) from Mus musculus (Mouse).